Here is a 524-residue protein sequence, read N- to C-terminus: Glutamyl-tRNA(Gln) amidotransferase subunit A, mitochondrial (524 aa).

K76 (charge relay system) is an active-site residue. Residues 146-168 (KQYRGKGSPDSSQEDQEPQWLVA) form a disordered region. The active-site Charge relay system is S171. S195 (acyl-ester intermediate) is an active-site residue.

Belongs to the amidase family. GatA subfamily. In terms of assembly, subunit of the heterotrimeric GatCAB amidotransferase (AdT) complex, composed of A (QRSL1), B (GATB) and C (GATC) subunits.

It localises to the mitochondrion. The enzyme catalyses L-glutamyl-tRNA(Gln) + L-glutamine + ATP + H2O = L-glutaminyl-tRNA(Gln) + L-glutamate + ADP + phosphate + H(+). Functionally, allows the formation of correctly charged Gln-tRNA(Gln) through the transamidation of misacylated Glu-tRNA(Gln) in the mitochondria. The reaction takes place in the presence of glutamine and ATP through an activated gamma-phospho-Glu-tRNA(Gln). This chain is Glutamyl-tRNA(Gln) amidotransferase subunit A, mitochondrial, found in Ornithorhynchus anatinus (Duckbill platypus).